A 215-amino-acid chain; its full sequence is Cytochrome c biogenesis ATP-binding export protein CcmA (215 aa).

Positions 3–211 constitute an ABC transporter domain; sequence LTAEILAARR…KMTGFAGVDN (209 aa). 35–42 lines the ATP pocket; that stretch reads GKNGSGKS.

Belongs to the ABC transporter superfamily. CcmA exporter (TC 3.A.1.107) family. The complex is composed of two ATP-binding proteins (CcmA) and two transmembrane proteins (CcmB).

The protein localises to the cell inner membrane. The enzyme catalyses heme b(in) + ATP + H2O = heme b(out) + ADP + phosphate + H(+). Part of the ABC transporter complex CcmAB involved in the biogenesis of c-type cytochromes; once thought to export heme, this seems not to be the case, but its exact role is uncertain. Responsible for energy coupling to the transport system. The chain is Cytochrome c biogenesis ATP-binding export protein CcmA from Rhizobium johnstonii (strain DSM 114642 / LMG 32736 / 3841) (Rhizobium leguminosarum bv. viciae).